Here is a 532-residue protein sequence, read N- to C-terminus: MASGPHPTSTAAAAAAAAASASSAAPSAGGSSSGTTTTTTTTTGGILIGDRLYSEVSLTIDHSLIPEERLSPTPSMQDGLDLPSETDLRILGCELIQAAGILLRLPQVAMATGQVLFHRFFYSKSFVKHSFEIVAMACINLASKIEEAPRRIRDVINVFHHLRQLRGKRTPSPLILDQNYINTKNQVIKAERRVLKELGFCVHVKHPHKIIVMYLQVLECERNQTLVQTAWNYMNDSLRTNVFVRFQPETIACACIYLAARALQIPLPTRPHWFLLFGTTEEEIQEICIETLRLYTRKKPNYELLEKEVEKRKVALQEAKLKAKGLNLDGTPALSTLGGFSPASKPSSPREVKAEEKSPVSINVKTVKKEPEDRQQASKSPYNGVRKDSKRSRTSRSASRSRSRTRSRSRSHSPRRHYNNRRSRSGTYSSRSRSRSRSHSESPRRHHNHGSPHLKAKHTREDLKSSNRHGHKRKKSRSRSQSKTRDHSDVTKKHRHERGHHRDRRERSRSFERSHKGKHHGGSRSGHGRHRR.

Cyclin-like regions lie at residues 94 to 196 (ELIQ…RVLK) and 209 to 293 (KIIV…ETLR). Threonine 331 carries the post-translational modification Phosphothreonine. The disordered stretch occupies residues 332–532 (PALSTLGGFS…SRSGHGRHRR (201 aa)). 2 positions are modified to phosphoserine: serine 341 and serine 344. Residues lysine 345 and lysine 353 each participate in a glycyl lysine isopeptide (Lys-Gly) (interchain with G-Cter in SUMO2) cross-link. Positions 348–358 (SPREVKAEEKS) are enriched in basic and acidic residues. A phosphoserine mark is found at serine 358 and serine 361. Residues 367-376 (VKKEPEDRQQ) are compositionally biased toward basic and acidic residues. Lysine 368 is covalently cross-linked (Glycyl lysine isopeptide (Lys-Gly) (interchain with G-Cter in SUMO2)). At serine 380 the chain carries Phosphoserine. 4 stretches are compositionally biased toward basic residues: residues 388-424 (DSKRSRTSRSASRSRSRTRSRSRSHSPRRHYNNRRSR), 444-458 (RRHHNHGSPHLKAKH), 466-482 (SNRHGHKRKKSRSRSQS), and 492-504 (KKHRHERGHHRDR). The RS stretch occupies residues 396–438 (RSASRSRSRTRSRSRSHSPRRHYNNRRSRSGTYSSRSRSRSRS). Serine 451 carries the post-translational modification Phosphoserine. Residues 505 to 514 (RERSRSFERS) are compositionally biased toward basic and acidic residues. Over residues 515-532 (HKGKHHGGSRSGHGRHRR) the composition is skewed to basic residues.

This sequence belongs to the cyclin family. Cyclin L subfamily. In terms of assembly, interacts with POLR2A via its hyperphosphorylated C-terminal domain (CTD). Interacts with CDK11A, CDK11B, CDK12 and CDK13. May form a ternary complex with CDK11B and casein kinase II (CKII). Interacts with pre-mRNA-splicing factors, including at least SRSF1, SRSF2 and SRSF7/SLU7. In terms of tissue distribution, widely expressed (at protein level).

It is found in the nucleus speckle. The protein localises to the nucleus. It localises to the nucleoplasm. Its subcellular location is the cytoplasm. Its function is as follows. Involved in pre-mRNA splicing. Functions in association with cyclin-dependent kinases (CDKs). May play a role in the regulation of RNA polymerase II (pol II). Inhibited by the CDK-specific inhibitor CDKN1A/p21. The protein is Cyclin-L1 (Ccnl1) of Mus musculus (Mouse).